The primary structure comprises 277 residues: Shikimate dehydrogenase (NADP(+)) (277 aa).

Shikimate-binding positions include 14 to 16 (SKS) and threonine 61. Lysine 65 acts as the Proton acceptor in catalysis. Position 77 (aspartate 77) interacts with NADP(+). 2 residues coordinate shikimate: asparagine 86 and aspartate 102. NADP(+) contacts are provided by residues 127–131 (GAGGA), 151–156 (NRTPDK), and methionine 215. Position 217 (tyrosine 217) interacts with shikimate. Position 239 (glycine 239) interacts with NADP(+).

It belongs to the shikimate dehydrogenase family. In terms of assembly, homodimer.

It catalyses the reaction shikimate + NADP(+) = 3-dehydroshikimate + NADPH + H(+). It functions in the pathway metabolic intermediate biosynthesis; chorismate biosynthesis; chorismate from D-erythrose 4-phosphate and phosphoenolpyruvate: step 4/7. In terms of biological role, involved in the biosynthesis of the chorismate, which leads to the biosynthesis of aromatic amino acids. Catalyzes the reversible NADPH linked reduction of 3-dehydroshikimate (DHSA) to yield shikimate (SA). The polypeptide is Shikimate dehydrogenase (NADP(+)) (Nitrosomonas eutropha (strain DSM 101675 / C91 / Nm57)).